The sequence spans 89 residues: Small ribosomal subunit protein uS14A (89 aa).

Belongs to the universal ribosomal protein uS14 family. Contacts proteins S3 and S10. Part of the 30S ribosomal subunit.

Functionally, binds 16S rRNA, required for the assembly of 30S particles and may also be responsible for determining the conformation of the 16S rRNA at the A site. In terms of biological role, non-essential protein. A second form of uS14, it can integrate into the 30S subunit where it partially compensates for loss of the major uS14 protein (AC P12878) in restoring 70S formation, although it does not seem to be incorporated into the ribosome as well as the major uS14. The chain is Small ribosomal subunit protein uS14A from Bacillus subtilis (strain 168).